The following is a 240-amino-acid chain: Orotidine 5'-phosphate decarboxylase (240 aa).

Substrate contacts are provided by residues Asp15, Lys37, 64–73, Thr125, Arg186, Gln195, Gly215, and Arg216; that span reads DLKYHDIPNT. The active-site Proton donor is the Lys66.

This sequence belongs to the OMP decarboxylase family. Type 1 subfamily. As to quaternary structure, homodimer.

The enzyme catalyses orotidine 5'-phosphate + H(+) = UMP + CO2. It participates in pyrimidine metabolism; UMP biosynthesis via de novo pathway; UMP from orotate: step 2/2. In terms of biological role, catalyzes the decarboxylation of orotidine 5'-monophosphate (OMP) to uridine 5'-monophosphate (UMP). The chain is Orotidine 5'-phosphate decarboxylase from Pelobacter propionicus (strain DSM 2379 / NBRC 103807 / OttBd1).